The sequence spans 367 residues: tRNA/tmRNA (uracil-C(5))-methyltransferase (367 aa).

Glutamine 189, tyrosine 217, asparagine 222, glutamate 238, and aspartate 298 together coordinate S-adenosyl-L-methionine. Catalysis depends on cysteine 323, which acts as the Nucleophile. Catalysis depends on glutamate 357, which acts as the Proton acceptor.

The protein belongs to the class I-like SAM-binding methyltransferase superfamily. RNA M5U methyltransferase family. TrmA subfamily.

It carries out the reaction uridine(54) in tRNA + S-adenosyl-L-methionine = 5-methyluridine(54) in tRNA + S-adenosyl-L-homocysteine + H(+). The enzyme catalyses uridine(341) in tmRNA + S-adenosyl-L-methionine = 5-methyluridine(341) in tmRNA + S-adenosyl-L-homocysteine + H(+). In terms of biological role, dual-specificity methyltransferase that catalyzes the formation of 5-methyluridine at position 54 (m5U54) in all tRNAs, and that of position 341 (m5U341) in tmRNA (transfer-mRNA). The polypeptide is tRNA/tmRNA (uracil-C(5))-methyltransferase (Pseudoalteromonas translucida (strain TAC 125)).